A 149-amino-acid chain; its full sequence is FAD synthase (149 aa).

ATP-binding positions include 9 to 10 (VF), 14 to 17 (HPGH), Asp93, and Tyr120.

Belongs to the archaeal FAD synthase family. In terms of assembly, homodimer. The cofactor is a divalent metal cation.

It catalyses the reaction FMN + ATP + H(+) = FAD + diphosphate. Its pathway is cofactor biosynthesis; FAD biosynthesis; FAD from FMN: step 1/1. Its function is as follows. Catalyzes the transfer of the AMP portion of ATP to flavin mononucleotide (FMN) to produce flavin adenine dinucleotide (FAD) coenzyme. The chain is FAD synthase from Aciduliprofundum boonei (strain DSM 19572 / T469).